An 803-amino-acid chain; its full sequence is Translation initiation factor IF-2 (803 aa).

A compositionally biased stretch (basic and acidic residues) spans Pro65–Thr75. Positions Pro65–Lys186 are disordered. Basic residues predominate over residues Asn175–Leu185. The 169-residue stretch at Ile300–Glu468 folds into the tr-type G domain. The tract at residues Gly309–Thr316 is G1. GTP is bound at residue Gly309–Thr316. The tract at residues Gly334–His338 is G2. A G3 region spans residues Asp355–Gly358. Residues Asp355–His359 and Asn409–Asp412 each bind GTP. Residues Asn409 to Asp412 form a G4 region. Residues Ser445–Lys447 form a G5 region.

This sequence belongs to the TRAFAC class translation factor GTPase superfamily. Classic translation factor GTPase family. IF-2 subfamily.

The protein localises to the cytoplasm. Functionally, one of the essential components for the initiation of protein synthesis. Protects formylmethionyl-tRNA from spontaneous hydrolysis and promotes its binding to the 30S ribosomal subunits. Also involved in the hydrolysis of GTP during the formation of the 70S ribosomal complex. This Tropheryma whipplei (strain Twist) (Whipple's bacillus) protein is Translation initiation factor IF-2.